We begin with the raw amino-acid sequence, 114 residues long: Superoxide dismutase [Cu-Zn] (114 aa).

The Cu cation site is built by His-37, His-39, and His-54. The tract at residues 48–76 (CMSSGPHFNPRSKEHGAPTDENRHLGDLG) is disordered. Residues His-54, His-62, His-71, and Asp-74 each coordinate Zn(2+). The segment covering 58-73 (RSKEHGAPTDENRHLG) has biased composition (basic and acidic residues). His-111 provides a ligand contact to Cu cation.

It belongs to the Cu-Zn superoxide dismutase family. In terms of assembly, homodimer. It depends on Cu cation as a cofactor. Zn(2+) serves as cofactor.

The protein resides in the cytoplasm. It carries out the reaction 2 superoxide + 2 H(+) = H2O2 + O2. Functionally, destroys radicals which are normally produced within the cells and which are toxic to biological systems. The protein is Superoxide dismutase [Cu-Zn] of Drosophila obscura (Fruit fly).